Here is a 305-residue protein sequence, read N- to C-terminus: Homoserine O-acetyltransferase (305 aa).

Cysteine 142 functions as the Acyl-thioester intermediate in the catalytic mechanism. Substrate-binding residues include lysine 163 and serine 192. Histidine 233 (proton acceptor) is an active-site residue. Glutamate 235 is a catalytic residue. Residue arginine 247 participates in substrate binding.

Belongs to the MetA family.

Its subcellular location is the cytoplasm. The enzyme catalyses L-homoserine + acetyl-CoA = O-acetyl-L-homoserine + CoA. The protein operates within amino-acid biosynthesis; L-methionine biosynthesis via de novo pathway; O-acetyl-L-homoserine from L-homoserine: step 1/1. Its function is as follows. Transfers an acetyl group from acetyl-CoA to L-homoserine, forming acetyl-L-homoserine. This Methanomassiliicoccus intestinalis (strain Issoire-Mx1) protein is Homoserine O-acetyltransferase.